The sequence spans 199 residues: Protein ZNRD2 (199 aa).

Ala2 carries the post-translational modification N-acetylalanine. Positions 53, 56, 70, and 73 each coordinate Zn(2+). Phosphoserine is present on Ser94. Positions 100–125 are disordered; the sequence is QLASASELPLGSRPAPQPPVPRPEHC. The Nuclear export signal motif lies at 173 to 194; sequence SLETSIQLCGLIRACAEALRSL.

As to quaternary structure, homodimer. Zn(2+) is required as a cofactor.

It localises to the cytoplasm. Functionally, might play a role in mitosis. Antigenic molecule. Could be a centromere-associated protein. May induce anti-centromere antibodies. The chain is Protein ZNRD2 from Homo sapiens (Human).